The following is a 103-amino-acid chain: Pyrimidine/purine nucleoside phosphorylase (103 aa).

This sequence belongs to the nucleoside phosphorylase PpnP family.

It carries out the reaction a purine D-ribonucleoside + phosphate = a purine nucleobase + alpha-D-ribose 1-phosphate. The enzyme catalyses adenosine + phosphate = alpha-D-ribose 1-phosphate + adenine. It catalyses the reaction cytidine + phosphate = cytosine + alpha-D-ribose 1-phosphate. The catalysed reaction is guanosine + phosphate = alpha-D-ribose 1-phosphate + guanine. It carries out the reaction inosine + phosphate = alpha-D-ribose 1-phosphate + hypoxanthine. The enzyme catalyses thymidine + phosphate = 2-deoxy-alpha-D-ribose 1-phosphate + thymine. It catalyses the reaction uridine + phosphate = alpha-D-ribose 1-phosphate + uracil. The catalysed reaction is xanthosine + phosphate = alpha-D-ribose 1-phosphate + xanthine. Catalyzes the phosphorolysis of diverse nucleosides, yielding D-ribose 1-phosphate and the respective free bases. Can use uridine, adenosine, guanosine, cytidine, thymidine, inosine and xanthosine as substrates. Also catalyzes the reverse reactions. This is Pyrimidine/purine nucleoside phosphorylase from Shewanella putrefaciens (strain CN-32 / ATCC BAA-453).